We begin with the raw amino-acid sequence, 249 residues long: DNA repair protein RecO (249 aa).

It belongs to the RecO family.

Involved in DNA repair and RecF pathway recombination. In Exiguobacterium sibiricum (strain DSM 17290 / CCUG 55495 / CIP 109462 / JCM 13490 / 255-15), this protein is DNA repair protein RecO.